The chain runs to 118 residues: UPF0344 protein YisL (118 aa).

4 consecutive transmembrane segments (helical) span residues 4 to 24 (LHIT…SLYS), 33 to 53 (ITHM…AELF), 62 to 82 (EYAG…MLLI), and 93 to 113 (LWVG…HLPI).

The protein belongs to the UPF0344 family.

It is found in the cell membrane. The chain is UPF0344 protein YisL (yisL) from Bacillus subtilis (strain 168).